Here is a 258-residue protein sequence, read N- to C-terminus: MFAVMKTGGKQYKVQAGDKLRVELLAAEAGEAVQFNEILMLGGDNVTVGAPLVEGAAVQANVIEQVKGAKLIHYVKRRRKHSSQRKKGHRQKLTLIEITDILASGGDKSGMKTAIGAGMVAVAAGAVATAAVVATKAAKKAKDAKDEAPKAAPKAEKKKAAPKKAKAEAAPAAADEGTRPANLLDAARDGKADDLKKISGVGPKLEGLLNENGVYHFDQIMAWGPSEIAYMDDKLSFKGRIERDNWIEQATAFAAEQE.

Basic and acidic residues predominate over residues lysine 140–lysine 159. Residues lysine 140–alanine 181 form a disordered region.

It belongs to the bacterial ribosomal protein bL21 family. Part of the 50S ribosomal subunit. Contacts protein L20.

Its function is as follows. This protein binds to 23S rRNA in the presence of protein L20. The chain is Large ribosomal subunit protein bL21 from Jannaschia sp. (strain CCS1).